Here is a 153-residue protein sequence, read N- to C-terminus: Ribosomal RNA large subunit methyltransferase H (153 aa).

S-adenosyl-L-methionine-binding positions include Leu70, Gly102, and 121–126 (LSRMTF).

Belongs to the RNA methyltransferase RlmH family. In terms of assembly, homodimer.

Its subcellular location is the cytoplasm. It carries out the reaction pseudouridine(1915) in 23S rRNA + S-adenosyl-L-methionine = N(3)-methylpseudouridine(1915) in 23S rRNA + S-adenosyl-L-homocysteine + H(+). In terms of biological role, specifically methylates the pseudouridine at position 1915 (m3Psi1915) in 23S rRNA. In Geobacter sulfurreducens (strain ATCC 51573 / DSM 12127 / PCA), this protein is Ribosomal RNA large subunit methyltransferase H.